Here is a 305-residue protein sequence, read N- to C-terminus: Ornithine carbamoyltransferase, catabolic (305 aa).

Carbamoyl phosphate contacts are provided by residues 50–53, Gln-77, Arg-101, and 128–131; these read STRT and HPLQ. L-ornithine is bound by residues Asn-159, Asp-223, and 227-228; that span reads SM. Residues 263-264 and Arg-291 each bind carbamoyl phosphate; that span reads CL.

The protein belongs to the aspartate/ornithine carbamoyltransferase superfamily. OTCase family.

It localises to the cytoplasm. It catalyses the reaction carbamoyl phosphate + L-ornithine = L-citrulline + phosphate + H(+). It participates in amino-acid degradation; L-arginine degradation via ADI pathway; carbamoyl phosphate from L-arginine: step 2/2. Reversibly catalyzes the transfer of the carbamoyl group from carbamoyl phosphate (CP) to the N(epsilon) atom of ornithine (ORN) to produce L-citrulline. The sequence is that of Ornithine carbamoyltransferase, catabolic from Thermoplasma volcanium (strain ATCC 51530 / DSM 4299 / JCM 9571 / NBRC 15438 / GSS1).